A 305-amino-acid polypeptide reads, in one-letter code: tRNA pseudouridine synthase B (305 aa).

Asp48 functions as the Nucleophile in the catalytic mechanism.

This sequence belongs to the pseudouridine synthase TruB family. Type 1 subfamily.

The enzyme catalyses uridine(55) in tRNA = pseudouridine(55) in tRNA. Its function is as follows. Responsible for synthesis of pseudouridine from uracil-55 in the psi GC loop of transfer RNAs. This Actinobacillus pleuropneumoniae serotype 5b (strain L20) protein is tRNA pseudouridine synthase B.